We begin with the raw amino-acid sequence, 234 residues long: Sugar fermentation stimulation protein A (234 aa).

Positions 201 to 220 form a DNA-binding region, H-T-H motif; the sequence is LLSEAQNKGVEVLAYKAELS.

This sequence belongs to the SfsA family.

Functionally, binds to DNA non-specifically. Could be a regulatory factor involved in maltose metabolism. In Salmonella arizonae (strain ATCC BAA-731 / CDC346-86 / RSK2980), this protein is Sugar fermentation stimulation protein A.